The sequence spans 51 residues: Sperm protamine P1 (51 aa).

2 cysteine pairs are disulfide-bonded: Cys-7/Cys-15 and Cys-40/Cys-48.

Belongs to the protamine P1 family. As to quaternary structure, cross-linked by interchain disulfide bonds around the DNA-helix. Post-translationally, phosphorylated by SRPK1. Testis.

Its subcellular location is the nucleus. The protein resides in the chromosome. Protamines substitute for histones in the chromatin of sperm during the haploid phase of spermatogenesis. They compact sperm DNA into a highly condensed, stable and inactive complex. The protein is Sperm protamine P1 (PRM1) of Bos taurus (Bovine).